A 139-amino-acid chain; its full sequence is Protein archease (139 aa).

The Ca(2+) site is built by Asp-12, Asp-138, and Ile-139.

This sequence belongs to the archease family.

In terms of biological role, activates the tRNA-splicing ligase complex by facilitating the enzymatic turnover of catalytic subunit RtcB. Acts by promoting the guanylylation of RtcB, a key intermediate step in tRNA ligation. Can also alter the NTP specificity of RtcB such that ATP, dGTP or ITP is used efficiently. The chain is Protein archease from Saccharolobus islandicus (strain L.S.2.15 / Lassen #1) (Sulfolobus islandicus).